Here is a 75-residue protein sequence, read N- to C-terminus: Protein EGO2 (75 aa).

The chain is Protein EGO2 from Saccharomyces cerevisiae (strain ATCC 204508 / S288c) (Baker's yeast).